We begin with the raw amino-acid sequence, 213 residues long: Vacuolar protein sorting-associated protein 32 homolog 1 (213 aa).

Coiled-coil stretches lie at residues 11 to 42 (KQETSTLQTLDKLNETLEMLEKKENVLLKKAT) and 118 to 176 (TNID…QLLQ). The disordered stretch occupies residues 180-213 (IHVPQGNKPARAPAQKQPTAEEDELAALQAEMAL).

The protein belongs to the SNF7 family. As to quaternary structure, component of the endosomal sorting required for transport complex III (ESCRT-III), composed at least of VPS2, VPS20, VPS24 and VPS32. Interacts with SKD1. Interacts with BRO1/ALIX.

Its subcellular location is the endosome. Component of the ESCRT-III complex, which is required for multivesicular bodies (MVBs) formation and sorting of endosomal cargo proteins into MVBs. The ESCRT-III complex is probably involved in the concentration of MVB cargo. This chain is Vacuolar protein sorting-associated protein 32 homolog 1 (VPS32.1), found in Arabidopsis thaliana (Mouse-ear cress).